The primary structure comprises 235 residues: 1-(5-phosphoribosyl)-5-[(5-phosphoribosylamino)methylideneamino] imidazole-4-carboxamide isomerase (235 aa).

Asp8 functions as the Proton acceptor in the catalytic mechanism. The active-site Proton donor is Asp128.

This sequence belongs to the HisA/HisF family.

The protein resides in the cytoplasm. It catalyses the reaction 1-(5-phospho-beta-D-ribosyl)-5-[(5-phospho-beta-D-ribosylamino)methylideneamino]imidazole-4-carboxamide = 5-[(5-phospho-1-deoxy-D-ribulos-1-ylimino)methylamino]-1-(5-phospho-beta-D-ribosyl)imidazole-4-carboxamide. The protein operates within amino-acid biosynthesis; L-histidine biosynthesis; L-histidine from 5-phospho-alpha-D-ribose 1-diphosphate: step 4/9. This Thermus thermophilus (strain ATCC BAA-163 / DSM 7039 / HB27) protein is 1-(5-phosphoribosyl)-5-[(5-phosphoribosylamino)methylideneamino] imidazole-4-carboxamide isomerase.